We begin with the raw amino-acid sequence, 167 residues long: Phosphopantetheine adenylyltransferase (167 aa).

Threonine 9 is a substrate binding site. ATP contacts are provided by residues 9–10 (TF) and histidine 17. Positions 41, 73, and 87 each coordinate substrate. ATP-binding positions include 88 to 90 (GLR), glutamate 98, and 123 to 129 (YQFISGT).

It belongs to the bacterial CoaD family. In terms of assembly, homohexamer. The cofactor is Mg(2+).

It is found in the cytoplasm. It carries out the reaction (R)-4'-phosphopantetheine + ATP + H(+) = 3'-dephospho-CoA + diphosphate. The protein operates within cofactor biosynthesis; coenzyme A biosynthesis; CoA from (R)-pantothenate: step 4/5. In terms of biological role, reversibly transfers an adenylyl group from ATP to 4'-phosphopantetheine, yielding dephospho-CoA (dPCoA) and pyrophosphate. The polypeptide is Phosphopantetheine adenylyltransferase (Ralstonia pickettii (strain 12J)).